A 254-amino-acid chain; its full sequence is Adenosylcobinamide-GDP ribazoletransferase (254 aa).

The next 6 helical transmembrane spans lie at 36–56 (YYPLVGLILGGALWLALTLLL), 61–81 (PLVTAALLLALELILTGGIHL), 114–134 (ALSAMVYLLLKFSLLAGLLAL), 138–158 (LVPYLVLFMPILSRWIFLIGV), 197–217 (WVLQWPGIAGFILATLFILLF), and 232–252 (LYGASIELSELLFLLGAFPLL).

This sequence belongs to the CobS family. Mg(2+) serves as cofactor.

It is found in the cell membrane. The catalysed reaction is alpha-ribazole + adenosylcob(III)inamide-GDP = adenosylcob(III)alamin + GMP + H(+). The enzyme catalyses alpha-ribazole 5'-phosphate + adenosylcob(III)inamide-GDP = adenosylcob(III)alamin 5'-phosphate + GMP + H(+). It participates in cofactor biosynthesis; adenosylcobalamin biosynthesis; adenosylcobalamin from cob(II)yrinate a,c-diamide: step 7/7. Joins adenosylcobinamide-GDP and alpha-ribazole to generate adenosylcobalamin (Ado-cobalamin). Also synthesizes adenosylcobalamin 5'-phosphate from adenosylcobinamide-GDP and alpha-ribazole 5'-phosphate. The polypeptide is Adenosylcobinamide-GDP ribazoletransferase (Desulfitobacterium hafniense (strain Y51)).